The sequence spans 380 residues: Palmitoyltransferase ZDHHC20 (380 aa).

Over 1–14 (MAPWTLWRCCQRVV) the chain is Cytoplasmic. A helical membrane pass occupies residues 15 to 35 (GWVPVLFITFVVVWSYYAYVV). Over 36–53 (ELCVSTISRTGEKGKTVV) the chain is Lumenal. Residues 54–74 (YLVAFHLFFVMFVWSYWMTIF) form a helical membrane-spanning segment. The Cytoplasmic portion of the chain corresponds to 75 to 169 (TSPASPSKEF…NNCVGFTNYK (95 aa)). One can recognise a DHHC domain in the interval 126–176 (RYCEKCQLIKPDRAHHCSACDRCVLKMDHHCPWVNNCVGFTNYKFFMLFLL). Zn(2+) is bound by residues cysteine 128 and cysteine 131. Residues lysine 135 and 140–143 (HHCS) contribute to the substrate site. Positions 141, 142, 145, 148, and 155 each coordinate Zn(2+). Catalysis depends on cysteine 156, which acts as the S-palmitoyl cysteine intermediate. Residue cysteine 162 coordinates Zn(2+). The helical transmembrane segment at 170-190 (FFMLFLLYSLLYCLFVAATVL) threads the bilayer. The Lumenal portion of the chain corresponds to 191–222 (EYFIKFWTLCRRKSTENCPKNEPTVLNFPSAK). The helical transmembrane segment at 223-246 (FHVLFLFFVSAMFFVSVLSLFSYH) threads the bilayer. Residues 247–380 (CWLVGKNRTT…NNHVTVEIEN (134 aa)) lie on the Cytoplasmic side of the membrane. Residues serine 320, serine 345, and serine 354 each carry the phosphoserine modification.

The protein belongs to the DHHC palmitoyltransferase family. Autopalmitoylated (in vitro). In terms of tissue distribution, highest levels in lung.

The protein resides in the golgi apparatus membrane. It localises to the cell membrane. It is found in the cytoplasm. Its subcellular location is the perinuclear region. The protein localises to the endoplasmic reticulum membrane. The protein resides in the endoplasmic reticulum-Golgi intermediate compartment membrane. The enzyme catalyses L-cysteinyl-[protein] + hexadecanoyl-CoA = S-hexadecanoyl-L-cysteinyl-[protein] + CoA. It catalyses the reaction L-cysteinyl-[protein] + tetradecanoyl-CoA = S-tetradecanoyl-L-cysteinyl-[protein] + CoA. It carries out the reaction L-cysteinyl-[protein] + octadecanoyl-CoA = S-octadecanoyl-L-cysteinyl-[protein] + CoA. In terms of biological role, palmitoyltransferase that could catalyze the addition of palmitate onto various protein substrates. Catalyzes palmitoylation of Cys residues in the cytoplasmic C-terminus of EGFR, and modulates the duration of EGFR signaling by modulating palmitoylation-dependent EGFR internalization and degradation. Has a preference for acyl-CoA with C16 fatty acid chains. Can also utilize acyl-CoA with C14 and C18 fatty acid chains. May palmitoylate CALHM1 subunit of gustatory voltage-gated ion channels and modulate channel gating and kinetics. This is Palmitoyltransferase ZDHHC20 from Mus musculus (Mouse).